The chain runs to 244 residues: Small ribosomal subunit protein eS6 (244 aa).

Residues 185–244 form a disordered region; the sequence is RLQRKRHMRAVKRRRYAKQREEEATYAKLLAKRKKEEREAHAKRRSSARESSLRESKSKA. The span at 186–201 shows a compositional bias: basic residues; sequence LQRKRHMRAVKRRRYA. The span at 231 to 244 shows a compositional bias: basic and acidic residues; it reads SARESSLRESKSKA.

This sequence belongs to the eukaryotic ribosomal protein eS6 family. Post-translationally, ribosomal protein S6 is the major substrate of protein kinases in eukaryote ribosomes.

In terms of biological role, component of the 40S small ribosomal subunit. Plays an important role in controlling cell growth and proliferation through the selective translation of particular classes of mRNA. In Branchiostoma floridae (Florida lancelet), this protein is Small ribosomal subunit protein eS6 (RPS6).